A 269-amino-acid chain; its full sequence is Regulatory protein RecX (269 aa).

Belongs to the RecX family.

It localises to the cytoplasm. Modulates RecA activity. The sequence is that of Regulatory protein RecX from Lactococcus lactis subsp. cremoris (strain MG1363).